A 342-amino-acid chain; its full sequence is MDSELKGQQLSDAEWCVKKINGEGNCLLLFLPMSSPTTIVMIVLVSLERLVPYVFKLSQTQLSQQCQSQGFTDSISLNLIKLKLMDILQAPQEINQIGLVDSNLVFSFDVSADITVSINSVPSHVTKDMFYMILQSLCMLLLKLVNLSTQYHYVQRDILNEKQKCLDFLLISLRDLDGGSKVISQWAPENSKNYESLQQCTDDDIIKKLLHKGKFQHQEFLADSLKTLLSLRNKFQDVSRFEESGELNKKERVRFPAVNHFYNDDFELQADPTNEARPNSRGKIKPKTDFKPKSRESSTSSQLRLENFSESEATPEKTKSSSSLVEEYPQKKRKFGKVRIKN.

2 helical membrane passes run 27 to 47 and 129 to 149; these read LLLF…LVSL and MFYM…NLST. The tract at residues 173–342 is interaction with LIF1; it reads LRDLDGGSKV…RKFGKVRIKN (170 aa). Residues 270 to 342 form a disordered region; that stretch reads ADPTNEARPN…RKFGKVRIKN (73 aa). Residues 286–296 are compositionally biased toward basic and acidic residues; it reads PKTDFKPKSRE. The span at 297–312 shows a compositional bias: polar residues; sequence SSTSSQLRLENFSESE. Positions 331 to 342 are enriched in basic residues; the sequence is KKRKFGKVRIKN.

It belongs to the XRCC4-XLF family. XLF subfamily. In terms of assembly, interacts (via C-terminus) with LIF1 (via N-terminus); the interaction is direct. Interacts with DNL4.

Its subcellular location is the cytoplasm. It is found in the nucleus membrane. Functionally, involved in non-homologous end joining (NHEJ). Facilitates the transport of LIF1 into the nucleus, where it can interact with DNA ligase DNL4 to repair double-strand breaks (DSB). Mediates mating-type regulation of NHEJ. Prevents chromosome circularisation by NHEJ in absence of telomerase. The chain is Non-homologous end-joining protein 1 (NEJ1) from Saccharomyces cerevisiae (strain ATCC 204508 / S288c) (Baker's yeast).